Consider the following 199-residue polypeptide: HTH-type transcriptional repressor NemR (199 aa).

The region spanning histidine 7–tyrosine 67 is the HTH tetR-type domain. Residues glycine 30–phenylalanine 49 constitute a DNA-binding region (H-T-H motif).

Functionally, involved in response to both electrophiles and reactive chlorine species (RCS). Represses the transcription of the nemRA-gloA operon by binding to the NemR box. The protein is HTH-type transcriptional repressor NemR (nemR) of Escherichia coli O6:H1 (strain CFT073 / ATCC 700928 / UPEC).